The chain runs to 80 residues: Serine rich endogenous peptide 18 (80 aa).

Positions 1–25 (MYNVVVCLLTLSFLLLTGLSNTAEA) are cleaved as a signal peptide. Positions 45 to 59 (KAEVGGSCSPHAHGR) match the SCOOP motif motif. The segment at 50–80 (GSCSPHAHGRGPPNRPGSSNIPGSPKRCTKP) is disordered. A SxS motif essential for MIK2 binding motif is present at residues 51 to 53 (SCS).

Belongs to the serine rich endogenous peptide (SCOOP) phytocytokine family. Interacts with MIK2 (via extracellular leucine-rich repeat domain); this interaction triggers the formation of complex between MIK2 and the BAK1/SERK3 and SERK4 coreceptors, and subsequent BAK1 activation by phosphorylation.

Its subcellular location is the cell membrane. It localises to the secreted. The protein localises to the extracellular space. It is found in the apoplast. Functionally, brassicaceae-specific phytocytokine (plant endogenous peptide released into the apoplast) perceived by MIK2 in a BAK1/SERK3 and SERK4 coreceptors-dependent manner, that modulates various physiological and antimicrobial processes including growth prevention and reactive oxygen species (ROS) response regulation. This Arabidopsis thaliana (Mouse-ear cress) protein is Serine rich endogenous peptide 18.